Here is a 146-residue protein sequence, read N- to C-terminus: Putative pre-16S rRNA nuclease (146 aa).

Belongs to the YqgF nuclease family.

The protein localises to the cytoplasm. In terms of biological role, could be a nuclease involved in processing of the 5'-end of pre-16S rRNA. In Paraburkholderia xenovorans (strain LB400), this protein is Putative pre-16S rRNA nuclease.